The primary structure comprises 192 residues: Large ribosomal subunit protein bL25 (192 aa).

Belongs to the bacterial ribosomal protein bL25 family. CTC subfamily. Part of the 50S ribosomal subunit; part of the 5S rRNA/L5/L18/L25 subcomplex. Contacts the 5S rRNA. Binds to the 5S rRNA independently of L5 and L18.

Functionally, this is one of the proteins that binds to the 5S RNA in the ribosome where it forms part of the central protuberance. This Solidesulfovibrio magneticus (strain ATCC 700980 / DSM 13731 / RS-1) (Desulfovibrio magneticus) protein is Large ribosomal subunit protein bL25.